The sequence spans 591 residues: ATPase family AAA domain-containing protein 3A (591 aa).

The tract at residues 1–52 (MSWLFGIKGPKGEGTGPPLPLPPAQPGAESGGDRGAGDRPSPKDKWSNFDPT) is disordered. Ser2 is modified (N-acetylserine). Residues 2-49 (SWLFGIKGPKGEGTGPPLPLPPAQPGAESGGDRGAGDRPSPKDKWSNF) form a required for interaction with the inner surface of the mitochondrial outer membrane region. Topologically, residues 2–245 (SWLFGIKGPK…FRAFVTDWDK (244 aa)) are mitochondrial intermembrane. A compositionally biased stretch (basic and acidic residues) spans 31-47 (GGDRGAGDRPSPKDKWS). A coiled-coil region spans residues 55–216 (ERAAKAAREL…REQIRLKAAE (162 aa)). Residues 246 to 263 (VTATVAGLTLLAVGVYSA) form a helical membrane-spanning segment. Over 264–591 (KNATSVAGRY…KPPHPSLLSC (328 aa)) the chain is Mitochondrial matrix. The segment at 289-304 (RISVLEALRHPIQVSR) is S100B-binding. Residue 351–358 (GPPGTGKT) participates in ATP binding. Lys490 bears the N6-acetyllysine; alternate mark. Lys490 carries the N6-succinyllysine; alternate modification. 2 positions are modified to N6-acetyllysine: Lys494 and Lys512.

Belongs to the AAA ATPase family. In terms of assembly, can form homooligomers. Homodimer formation at the N-terminus may be regulated by ATP and is required for the interaction with the inner surface of the mitochondrial outer membrane and correct mitochondrial homeostasis. Interacts with components of the mitochondrial ribosome and with other proteins involved in mitochondrial RNA metabolism. May also interact with protein involved in lipid metabolism, including STARD9. May interact with FAM210A. Interacts with GADD45GIP1. Interacts with S100B in a Ca(+2)- and Zn(+2)-dependent manner; this interaction probably occurs in the cytosol prior to mitochondrial targeting. S100B could assist ATAD3A cytoplasmic processing, preventing aggregation and favoring mitochondrial localization. Interacts with HSP60/HSPD1. Interacts with CLPB. Interacts with EIF2AK3/PERK; ATAD3A and EIF2S1/eIF-2-alpha occupy a common binding site within the cytoplasmic loop of EIF2AK3/PERK, leading to prevent EIF2AK3/PERK association with its substrate EIF2S1/eIF-2-alpha.

It localises to the mitochondrion inner membrane. The protein localises to the mitochondrion matrix. Its subcellular location is the mitochondrion nucleoid. The catalysed reaction is ATP + H2O = ADP + phosphate + H(+). In terms of biological role, essential for mitochondrial network organization, mitochondrial metabolism and cell growth at organism and cellular level. May play an important role in mitochondrial protein synthesis. May also participate in mitochondrial DNA replication. May bind to mitochondrial DNA D-loops and contribute to nucleoid stability. Required for enhanced channeling of cholesterol for hormone-dependent steroidogenesis. Involved in mitochondrial-mediated antiviral innate immunity. Required to protect mitochondria from the PERK-mediated unfolded protein response: specifically inhibits the activity of EIF2AK3/PERK at mitochondria-endoplasmic reticulum contact sites, thereby providing a safe haven for mitochondrial protein translation during endoplasmic reticulum stress. Ability to inhibit EIF2AK3/PERK is independent of its ATPase activity. Also involved in the mitochondrial DNA damage response by promoting signaling between damaged genomes and the mitochondrial membrane, leading to activation of the integrated stress response (ISR). This chain is ATPase family AAA domain-containing protein 3A (Atad3a), found in Rattus norvegicus (Rat).